We begin with the raw amino-acid sequence, 567 residues long: MTQKSPANEHDSNHFDVIILGSGMSGTQMGAILAKQQFRVLIIEESSHPRFTIGESSIPETSLMNRIIADRYGIPELDHITSFYSTQRYVASSTGIKRNFGFVFHKPGQEHDPKEFTQCVIPELPWGPESHYYRQDVDAYLLQAAIKYGCKVHQKTTVTEYHADKDGVAVTTAQGERFTGRYMIDCGGPRAPLATKFKLREEPCRFKTHSRSLYTHMLGVKPFDDIFKVKGQRWRWHEGTLHHMFEGGWLWVIPFNNHPRSTNNLVSVGLQLDPRVYPKTDISAQQEFDEFLARFPSIGAQFRDAVPVRDWVKTDRLQFSSNACVGDRYCLMLHANGFIDPLFSRGLENTAVTIHALAARLIKALRDDDFSPERFEYIERLQQKLLDHNDDFVSCCYTAFSDFRLWDAFHRLWAVGTILGQFRLVQAHARFRASRNEGDLDHLDNDPPYLGYLCADMEEYYQLFNDAKAEVEAVSAGRKPADEAAARIHALIDERDFAKPMFGFGYCITGDKPQLNNSKYSLLPAMRLMYWTQTRAPAEVKKYFDYNPMFALLKAYITTRIGLALKK.

Its pathway is antibiotic biosynthesis. Its function is as follows. Involved in the biosynthesis of the antifungal antibiotic pyrrolnitrin. Catalyzes the chlorination of monodechloroaminopyrrolnitrin (MDA) at the 3 position to form aminopyrrolnitrin (APRN). This is Monodechloroaminopyrrolnitrin halogenase PrnC (prnC) from Pseudomonas fluorescens.